The following is a 398-amino-acid chain: Succinate--CoA ligase [ADP-forming] subunit beta (398 aa).

Positions 9 to 254 constitute an ATP-grasp domain; that stretch reads KRLLHTYGAP…LSEEDEKEIE (246 aa). Residues Lys46, 53–55, Glu109, Ala112, and Glu117 each bind ATP; that span reads GRG. Residues Asn209 and Asp223 each coordinate Mg(2+). Substrate is bound by residues Asn274 and 331–333; that span reads GIM.

Belongs to the succinate/malate CoA ligase beta subunit family. Heterotetramer of two alpha and two beta subunits. It depends on Mg(2+) as a cofactor.

The enzyme catalyses succinate + ATP + CoA = succinyl-CoA + ADP + phosphate. It carries out the reaction GTP + succinate + CoA = succinyl-CoA + GDP + phosphate. It participates in carbohydrate metabolism; tricarboxylic acid cycle; succinate from succinyl-CoA (ligase route): step 1/1. In terms of biological role, succinyl-CoA synthetase functions in the citric acid cycle (TCA), coupling the hydrolysis of succinyl-CoA to the synthesis of either ATP or GTP and thus represents the only step of substrate-level phosphorylation in the TCA. The beta subunit provides nucleotide specificity of the enzyme and binds the substrate succinate, while the binding sites for coenzyme A and phosphate are found in the alpha subunit. This Brucella anthropi (strain ATCC 49188 / DSM 6882 / CCUG 24695 / JCM 21032 / LMG 3331 / NBRC 15819 / NCTC 12168 / Alc 37) (Ochrobactrum anthropi) protein is Succinate--CoA ligase [ADP-forming] subunit beta.